Consider the following 206-residue polypeptide: Musculin (206 aa).

Residues 1 to 115 (MSTGSVSDPE…QSQRNAANAR (115 aa)) form a disordered region. Residues 46-56 (SAEEEDPDGEE) are compositionally biased toward acidic residues. Positions 71–76 (KRKRPR) match the Nuclear localization signal motif. A compositionally biased stretch (gly residues) spans 78-92 (AGGGGAGGSAGGGGK). Residues 93–102 (KPLPAKGSAA) are compositionally biased toward low complexity. Residues 107 to 159 (SQRNAANARERARMRVLSKAFSRLKTSLPWVPPDTKLSKLDTLRLASSYIAHL) enclose the bHLH domain.

In terms of assembly, efficient DNA binding requires dimerization with another bHLH protein. Binds DNA as a homodimer or a heterodimer. Forms a heterodimer with TCF3. Expressed in lymphoid tissues, B-cell lines and activated B-cells.

The protein resides in the nucleus. Its function is as follows. Transcription repressor capable of inhibiting the transactivation capability of TCF3/E47. May play a role in regulating antigen-dependent B-cell differentiation. The polypeptide is Musculin (MSC) (Homo sapiens (Human)).